The following is a 355-amino-acid chain: 3-dehydroquinate synthase (355 aa).

NAD(+) contacts are provided by residues 71-76 (EGEASK), 105-109 (GVVGD), 129-130 (TS), lysine 142, and lysine 151. The Zn(2+) site is built by glutamate 184, histidine 246, and histidine 263.

Belongs to the sugar phosphate cyclases superfamily. Dehydroquinate synthase family. It depends on Co(2+) as a cofactor. Zn(2+) is required as a cofactor. The cofactor is NAD(+).

It localises to the cytoplasm. The catalysed reaction is 7-phospho-2-dehydro-3-deoxy-D-arabino-heptonate = 3-dehydroquinate + phosphate. The protein operates within metabolic intermediate biosynthesis; chorismate biosynthesis; chorismate from D-erythrose 4-phosphate and phosphoenolpyruvate: step 2/7. Catalyzes the conversion of 3-deoxy-D-arabino-heptulosonate 7-phosphate (DAHP) to dehydroquinate (DHQ). This Streptococcus thermophilus (strain ATCC BAA-491 / LMD-9) protein is 3-dehydroquinate synthase.